Reading from the N-terminus, the 273-residue chain is ATP synthase subunit delta (273 aa).

This sequence belongs to the ATPase delta chain family. As to quaternary structure, F-type ATPases have 2 components, F(1) - the catalytic core - and F(0) - the membrane proton channel. F(1) has five subunits: alpha(3), beta(3), gamma(1), delta(1), epsilon(1). F(0) has three main subunits: a(1), b(2) and c(10-14). The alpha and beta chains form an alternating ring which encloses part of the gamma chain. F(1) is attached to F(0) by a central stalk formed by the gamma and epsilon chains, while a peripheral stalk is formed by the delta and b chains.

It is found in the cell membrane. Functionally, f(1)F(0) ATP synthase produces ATP from ADP in the presence of a proton or sodium gradient. F-type ATPases consist of two structural domains, F(1) containing the extramembraneous catalytic core and F(0) containing the membrane proton channel, linked together by a central stalk and a peripheral stalk. During catalysis, ATP synthesis in the catalytic domain of F(1) is coupled via a rotary mechanism of the central stalk subunits to proton translocation. In terms of biological role, this protein is part of the stalk that links CF(0) to CF(1). It either transmits conformational changes from CF(0) to CF(1) or is implicated in proton conduction. This chain is ATP synthase subunit delta, found in Streptomyces avermitilis (strain ATCC 31267 / DSM 46492 / JCM 5070 / NBRC 14893 / NCIMB 12804 / NRRL 8165 / MA-4680).